The following is a 31-amino-acid chain: Protamine PTP4 (31 aa).

Residues 1-31 (MPRRRRASRRIRRRRRPRVSRRRRGGRRRRR) form a disordered region.

Testis.

The protein localises to the nucleus. The protein resides in the chromosome. Functionally, protamines substitute for histones in the chromatin of sperm during the haploid phase of spermatogenesis. They compact sperm DNA into a highly condensed, stable and inactive complex. The protein is Protamine PTP4 of Oncorhynchus mykiss (Rainbow trout).